The primary structure comprises 325 residues: Proto-oncogene Mas (325 aa).

Over 1–36 (MDGSNVTSFVVEEPTNISTGRNASVGNAHRQIPIVH) the chain is Extracellular. N-linked (GlcNAc...) asparagine glycosylation is found at N5, N16, and N22. The helical transmembrane segment at 37 to 61 (WVIMSISPVGFVENGILLWFLCFRM) threads the bilayer. The Cytoplasmic segment spans residues 62-65 (RRNP). Residues 66–86 (FTVYITHLSIADISLLFCIFI) form a helical membrane-spanning segment. The Extracellular portion of the chain corresponds to 87–104 (LSIDYALDYELSSGHYYT). Residues 105–128 (IVTLSVTFLFGYNTGLYLLTAISV) form a helical membrane-spanning segment. Residues 129-149 (ERCLSVLYPIWYRCHRPKYQS) are Cytoplasmic-facing. A helical transmembrane segment spans residues 150–172 (ALVCALLWALSCLVTTMEYVMCI). At 173-185 (DREEESHSRNDCR) the chain is on the extracellular side. Residues 186 to 206 (AVIIFIAILSFLVFTPLMLVS) traverse the membrane as a helical segment. At 207–224 (STILVVKIRKNTWASHSS) the chain is on the cytoplasmic side. A helical membrane pass occupies residues 225–245 (KLYIVIMVTIIIFLIFAMPMR). Residues 246 to 263 (LLYLLYYEYWSTFGNLHH) lie on the Extracellular side of the membrane. The chain crosses the membrane as a helical span at residues 264-284 (ISLLFSTINSSANPFIYFFVG). At 285-325 (SSKKKRFKESLKVVLTRAFKDEMQPRRQKDNCNTVTVETVV) the chain is on the cytoplasmic side.

Belongs to the G-protein coupled receptor 1 family. Interacts with AGTR1. Interacts with FLNA (via filamin repeat 21); increases PKA-mediated phosphorylation of FLNA.

It is found in the cell membrane. Its function is as follows. Receptor for angiotensin 1-7. Acts specifically as a functional antagonist of AGTR1 (angiotensin-2 type 1 receptor), although it up-regulates AGTR1 receptor levels. Positive regulation of AGTR1 levels occurs through activation of the G-proteins GNA11 and GNAQ, and stimulation of the protein kinase C signaling cascade. The antagonist effect on AGTR1 function is probably due to AGTR1 being physically altered by MAS1. This is Proto-oncogene Mas (MAS1) from Homo sapiens (Human).